A 311-amino-acid chain; its full sequence is Mitochondrial ribosome-associated GTPase 1 (311 aa).

Residues 27–200 (AKGLKQMKTK…LFDTPGVLSP (174 aa)) enclose the CP-type G domain. Residues 74-77 (NKMD), 144-149 (NVGKSS), and glycine 196 each bind GTP.

It belongs to the TRAFAC class YlqF/YawG GTPase family. MTG1 subfamily.

It localises to the mitochondrion inner membrane. Functionally, plays a role in the regulation of the mitochondrial ribosome assembly and of translational activity. Displays mitochondrial GTPase activity. The chain is Mitochondrial ribosome-associated GTPase 1 from Xenopus tropicalis (Western clawed frog).